Consider the following 408-residue polypeptide: LL-diaminopimelate aminotransferase (408 aa).

Positions 15 and 42 each coordinate substrate. Pyridoxal 5'-phosphate contacts are provided by residues Tyr-72, 108 to 109, Tyr-132, Asn-187, Tyr-218, and 246 to 248; these read SK and SFS. 3 residues coordinate substrate: Lys-109, Tyr-132, and Asn-187. Lys-249 carries the post-translational modification N6-(pyridoxal phosphate)lysine. 2 residues coordinate pyridoxal 5'-phosphate: Arg-257 and Asn-291. The substrate site is built by Asn-291 and Arg-387.

Belongs to the class-I pyridoxal-phosphate-dependent aminotransferase family. LL-diaminopimelate aminotransferase subfamily. As to quaternary structure, homodimer. It depends on pyridoxal 5'-phosphate as a cofactor.

It carries out the reaction (2S,6S)-2,6-diaminopimelate + 2-oxoglutarate = (S)-2,3,4,5-tetrahydrodipicolinate + L-glutamate + H2O + H(+). It functions in the pathway amino-acid biosynthesis; L-lysine biosynthesis via DAP pathway; LL-2,6-diaminopimelate from (S)-tetrahydrodipicolinate (aminotransferase route): step 1/1. Involved in the synthesis of meso-diaminopimelate (m-DAP or DL-DAP), required for both lysine and peptidoglycan biosynthesis. Catalyzes the direct conversion of tetrahydrodipicolinate to LL-diaminopimelate. This is LL-diaminopimelate aminotransferase from Prochlorococcus marinus (strain NATL2A).